The following is a 105-amino-acid chain: uncharacterized protein (105 aa).

Residues 25 to 47 form a helical membrane-spanning segment; the sequence is AHSVTLLFGIFRSSPFLLLFLLI. The disordered stretch occupies residues 54–89; sequence GRGSQRMKKKRGRANPSENLRERADPTNGPAENGKK.

It localises to the membrane. This is an uncharacterized protein from Saccharomyces cerevisiae (strain ATCC 204508 / S288c) (Baker's yeast).